Consider the following 295-residue polypeptide: Aquaporin-9 (295 aa).

Topologically, residues 1–24 are cytoplasmic; it reads MPSEKDGAKKSLMQRLALKSRIAK. Residues 25-43 form a helical membrane-spanning segment; that stretch reads ETLSEFLGTFIMIVLGCSS. The Extracellular portion of the chain corresponds to 44 to 57; the sequence is IAQAVLSRERFGGI. A helical transmembrane segment spans residues 58–77; it reads ITINIGFASAVVMALYVTFG. Residues 78–79 are Cytoplasmic-facing; that stretch reads IS. Residues 80-92 constitute an intramembrane region (discontinuously helical); that stretch reads GGHINPAVSFAMC. The NPA 1 motif lies at 84–86; that stretch reads NPA. Residues 93-98 are Cytoplasmic-facing; that stretch reads AFGRME. Residues 99 to 123 form a helical membrane-spanning segment; it reads WFKFPFYVGAQFLGAFVGAATVFGI. The Extracellular portion of the chain corresponds to 124–160; it reads YYDGLMAFAGGKLLVVGENATAFIFATYPAPFISTPG. A helical transmembrane segment spans residues 161–178; that stretch reads AFVDQVVSTMFLLLIVFA. At 179-190 the chain is on the cytoplasmic side; sequence MFDSRNLGVPRG. A helical transmembrane segment spans residues 191-207; the sequence is LEPVVIGLLIIVLSCSL. The Extracellular portion of the chain corresponds to 208–210; the sequence is GLN. The discontinuously helical intramembrane region spans 211-225; sequence SGCAMNPARDLSPRL. The NPA 2 motif lies at 216–218; that stretch reads NPA. Over 226 to 243 the chain is Extracellular; sequence FTALAGWGFEVFTVGNNF. A helical membrane pass occupies residues 244–264; that stretch reads WWIPVVGPMIGAFLGGLIYIL. Residues 265-295 are Cytoplasmic-facing; that stretch reads FIQMHHSKLDPDMKAEPSENNLEKHELSVIM.

It belongs to the MIP/aquaporin (TC 1.A.8) family. Homotetramer; each monomer provides an independent glycerol/water pore. Detected in testis and liver. Detected in immature spermatocytes and in interstitial Leydig cells.

It is found in the cell membrane. The protein localises to the basolateral cell membrane. The catalysed reaction is H2O(in) = H2O(out). It carries out the reaction glycerol(in) = glycerol(out). The enzyme catalyses urea(in) = urea(out). It catalyses the reaction (S)-lactate(in) = (S)-lactate(out). The catalysed reaction is NH4(+)(in) = NH4(+)(out). It carries out the reaction uracil(in) = uracil(out). The enzyme catalyses adenine(out) = adenine(in). It catalyses the reaction 3-hydroxybutanoate(in) = 3-hydroxybutanoate(out). The catalysed reaction is D-sorbitol(in) = D-sorbitol(out). It carries out the reaction D-mannitol(in) = D-mannitol(out). The enzyme catalyses H2O2(out) = H2O2(in). It catalyses the reaction arsenite(in) = arsenite(out). The catalysed reaction is selenite(in) = selenite(out). Its activity is regulated as follows. Channel activity is inhibited by mercury ions and phloretin. Functionally, aquaglyceroporins form homotetrameric transmembrane channels, with each monomer independently mediating glycerol and water transport across the plasma membrane along their osmotic gradient. AQP9 is the primary route for glycerol uptake in hepatocytes, supporting hepatic gluconeogenesis. It exhibits broad specificity and may transport various small, non-charged solutes, including carbamides, polyols, purines, and pyrimidines. AQP9 may also facilitate hepatic urea extrusion. Due to its permeability to lactate, AQP9 might participate in the astrocyte-to-neuron lactate shuttle, supplying neurons with energy. Additionally, AQP9 is permeable to arsenite, contributing to arsenic excretion by the liver and providing partial protection against arsenic toxicity. It is also permeable to H2O2 in vivo. Could also be permeable to ammonium. This Rattus norvegicus (Rat) protein is Aquaporin-9.